A 247-amino-acid chain; its full sequence is Segregation and condensation protein A (247 aa).

The protein belongs to the ScpA family. As to quaternary structure, component of a cohesin-like complex composed of ScpA, ScpB and the Smc homodimer, in which ScpA and ScpB bind to the head domain of Smc. The presence of the three proteins is required for the association of the complex with DNA.

It localises to the cytoplasm. Participates in chromosomal partition during cell division. May act via the formation of a condensin-like complex containing Smc and ScpB that pull DNA away from mid-cell into both cell halves. The chain is Segregation and condensation protein A from Lactobacillus gasseri (strain ATCC 33323 / DSM 20243 / BCRC 14619 / CIP 102991 / JCM 1131 / KCTC 3163 / NCIMB 11718 / NCTC 13722 / AM63).